The following is a 150-amino-acid chain: D-aminoacyl-tRNA deacylase (150 aa).

Positions 138–139 (GP) match the Gly-cisPro motif, important for rejection of L-amino acids motif.

The protein belongs to the DTD family. In terms of assembly, homodimer.

The protein resides in the cytoplasm. It catalyses the reaction glycyl-tRNA(Ala) + H2O = tRNA(Ala) + glycine + H(+). The enzyme catalyses a D-aminoacyl-tRNA + H2O = a tRNA + a D-alpha-amino acid + H(+). Functionally, an aminoacyl-tRNA editing enzyme that deacylates mischarged D-aminoacyl-tRNAs. Also deacylates mischarged glycyl-tRNA(Ala), protecting cells against glycine mischarging by AlaRS. Acts via tRNA-based rather than protein-based catalysis; rejects L-amino acids rather than detecting D-amino acids in the active site. By recycling D-aminoacyl-tRNA to D-amino acids and free tRNA molecules, this enzyme counteracts the toxicity associated with the formation of D-aminoacyl-tRNA entities in vivo and helps enforce protein L-homochirality. This is D-aminoacyl-tRNA deacylase from Parabacteroides distasonis (strain ATCC 8503 / DSM 20701 / CIP 104284 / JCM 5825 / NCTC 11152).